The primary structure comprises 253 residues: Triosephosphate isomerase (253 aa).

8–10 (NWK) contributes to the substrate binding site. Catalysis depends on His-93, which acts as the Electrophile. The active-site Proton acceptor is Glu-165. Residues Gly-171, Ser-210, and 231 to 232 (GG) each bind substrate.

It belongs to the triosephosphate isomerase family. As to quaternary structure, homodimer.

The protein localises to the cytoplasm. It carries out the reaction D-glyceraldehyde 3-phosphate = dihydroxyacetone phosphate. It functions in the pathway carbohydrate biosynthesis; gluconeogenesis. Its pathway is carbohydrate degradation; glycolysis; D-glyceraldehyde 3-phosphate from glycerone phosphate: step 1/1. In terms of biological role, involved in the gluconeogenesis. Catalyzes stereospecifically the conversion of dihydroxyacetone phosphate (DHAP) to D-glyceraldehyde-3-phosphate (G3P). The polypeptide is Triosephosphate isomerase (Francisella tularensis subsp. tularensis (strain FSC 198)).